The following is a 132-amino-acid chain: Fluoride-specific ion channel FluC (132 aa).

A run of 4 helical transmembrane segments spans residues 5–25 (LVAIGAGAALGANLRWLLGMW), 36–56 (GTLAANWLGAWLIGIAIALFA), 68–88 (FVVTGFLGALTTFSTFSAEMF), and 103–123 (IAVHVAGSLAMTGLGIATFGA). Positions 75 and 78 each coordinate Na(+).

It belongs to the fluoride channel Fluc/FEX (TC 1.A.43) family.

The protein localises to the cell inner membrane. It carries out the reaction fluoride(in) = fluoride(out). Na(+) is not transported, but it plays an essential structural role and its presence is essential for fluoride channel function. In terms of biological role, fluoride-specific ion channel. Important for reducing fluoride concentration in the cell, thus reducing its toxicity. The polypeptide is Fluoride-specific ion channel FluC (Chromohalobacter salexigens (strain ATCC BAA-138 / DSM 3043 / CIP 106854 / NCIMB 13768 / 1H11)).